A 1209-amino-acid polypeptide reads, in one-letter code: Phospholipid-transporting ATPase ID (1209 aa).

Positions 1-12 are enriched in basic and acidic residues; the sequence is MTVPKEMPEKWA. Positions 1 to 36 are disordered; that stretch reads MTVPKEMPEKWARAQAPPSWSRKKPSWGTEEERRAR. At 1 to 64 the chain is on the cytoplasmic side; sequence MTVPKEMPEK…TSKYNILTFL (64 aa). A helical transmembrane segment spans residues 65 to 86; it reads PVNLFEQFQEVANTYFLFLLIL. At 87-92 the chain is on the exoplasmic loop side; it reads QLIPQI. Residues 93–112 form a helical membrane-spanning segment; the sequence is SSLSWFTTIVPLVLVLTITA. Residues 113–295 are Cytoplasmic-facing; it reads VKDATDDYFR…TSIDRLMNTL (183 aa). Residues 296–317 form a helical membrane-spanning segment; it reads VLWIFGFLVCMGVILAIGNAIW. The Exoplasmic loop portion of the chain corresponds to 318 to 346; sequence EHEVGMRFQVYLPWDEAVDSAFFSGFLSF. The chain crosses the membrane as a helical span at residues 347–368; sequence WSYIIILNTVVPISLYVSVEVI. The Cytoplasmic portion of the chain corresponds to 369–889; the sequence is RLGHSYFINW…GRWSYLRMCK (521 aa). Asp411 serves as the catalytic 4-aspartylphosphate intermediate. Asp411, Lys412, Thr413, Glu515, Phe556, Lys579, Arg613, Thr693, Gly694, Asp695, Arg807, and Lys813 together coordinate ATP. Asp411 is a binding site for Mg(2+). Residue Thr413 coordinates Mg(2+). A Mg(2+)-binding site is contributed by Asp833. Asn836 and Asp837 together coordinate ATP. Asp837 contacts Mg(2+). Residues 890–910 form a helical membrane-spanning segment; that stretch reads FLCYFFYKNFAFTMVHFWFGF. The Exoplasmic loop portion of the chain corresponds to 911–922; that stretch reads FCGFSAQTVYDQ. Residues 923–942 form a helical membrane-spanning segment; it reads YFITLYNIVYTSLPVLAMGV. At 943–972 the chain is on the cytoplasmic side; sequence FDQDVPEQRSMEYPKLYEPGQLNLLFNKRE. Residues 973–994 form a helical membrane-spanning segment; the sequence is FFICIAQGIYTSVLMFFIPYGV. The Exoplasmic loop segment spans residues 995-1008; that stretch reads FADATRDDGTQLAD. A helical membrane pass occupies residues 1009–1031; sequence YQSFAVTVATSLVIVVSVQIGLD. Topologically, residues 1032 to 1037 are cytoplasmic; the sequence is TGYWTA. A helical membrane pass occupies residues 1038–1058; sequence INHFFIWGSLAVYFAILFAMH. Residues 1059–1078 lie on the Exoplasmic loop side of the membrane; sequence SNGLFDMFPNQFRFVGNAQN. The chain crosses the membrane as a helical span at residues 1079-1103; it reads TLAQPTVWLTIVLTTVVCIMPVVAF. Residues 1104-1209 are Cytoplasmic-facing; the sequence is RFLRLNLKPD…SGGADKPLKG (106 aa). Ser1175 is modified (phosphoserine). A disordered region spans residues 1181–1209; it reads SSSWIESLRRKKSDSASSPSGGADKPLKG. Residues 1195–1209 are compositionally biased toward low complexity; it reads SASSPSGGADKPLKG.

The protein belongs to the cation transport ATPase (P-type) (TC 3.A.3) family. Type IV subfamily. As to quaternary structure, component of a P4-ATPase flippase complex which consists of a catalytic alpha subunit ATP8B2 and an accessory beta subunit TMEM30A or TMEM30B. Mg(2+) serves as cofactor. In terms of tissue distribution, isoform 3 is ubiquitous, with highest expression in aorta, cerebellum and uterus.

It localises to the cell membrane. The protein resides in the endoplasmic reticulum membrane. It catalyses the reaction ATP + H2O + phospholipidSide 1 = ADP + phosphate + phospholipidSide 2.. The enzyme catalyses a 1,2-diacyl-sn-glycero-3-phosphocholine(out) + ATP + H2O = a 1,2-diacyl-sn-glycero-3-phosphocholine(in) + ADP + phosphate + H(+). Its function is as follows. Catalytic component of P4-ATPase flippase complex, which catalyzes the hydrolysis of ATP coupled to the transport of phosphatidylcholine (PC) from the outer to the inner leaflet of the plasma membrane. May contribute to the maintenance of membrane lipid asymmetry. The sequence is that of Phospholipid-transporting ATPase ID from Homo sapiens (Human).